We begin with the raw amino-acid sequence, 417 residues long: Cotranscriptional regulator ARB2A (417 aa).

The N-terminal stretch at 1 to 18 (MSISLSSLIFLPIWINMA) is a signal peptide. Asn-26 carries N-linked (GlcNAc...) asparagine glycosylation. Residues 208-248 (KQKMHKQSSSSDGTDEPAGKRERRDKVSKETKKRRDFYEKY) form a disordered region. Basic and acidic residues predominate over residues 224–237 (PAGKRERRDKVSKE). Residue Ser-294 is the Nucleophile of the active site. The segment at 398–417 (SSSQKPALTRRSHRIKHEEL) is disordered. Positions 405–417 (LTRRSHRIKHEEL) are enriched in basic residues. A Prevents secretion from ER motif is present at residues 414–417 (HEEL).

This sequence belongs to the ARB2A family. As to quaternary structure, interacts with AGO2. Found in a complex, composed of AGO2, CHD7 and ARB2A.

It is found in the nucleus. The protein localises to the cytoplasm. The protein resides in the endoplasmic reticulum. Plays a role in the regulation of alternative splicing, by interacting with AGO2 and CHD7. Seems to be required for stabilizing protein-protein interactions at the chromatin-spliceosome interface. May have hydrolase activity. The sequence is that of Cotranscriptional regulator ARB2A (Arb2a) from Mus musculus (Mouse).